Consider the following 199-residue polypeptide: Dephospho-CoA kinase (199 aa).

Residues 3 to 199 (VLGLTGSIGM…AAAKMPRRRD (197 aa)) enclose the DPCK domain. 11-16 (GMGKST) lines the ATP pocket.

It belongs to the CoaE family.

The protein localises to the cytoplasm. The enzyme catalyses 3'-dephospho-CoA + ATP = ADP + CoA + H(+). It functions in the pathway cofactor biosynthesis; coenzyme A biosynthesis; CoA from (R)-pantothenate: step 5/5. Its function is as follows. Catalyzes the phosphorylation of the 3'-hydroxyl group of dephosphocoenzyme A to form coenzyme A. This is Dephospho-CoA kinase from Rhodopseudomonas palustris (strain ATCC BAA-98 / CGA009).